We begin with the raw amino-acid sequence, 799 residues long: Elongation factor G, mitochondrial (799 aa).

Residues 1–34 constitute a mitochondrion transit peptide; it reads MRCPSLTRLPYRAVSGLPRSVVRLQSQNFLTRRC. Residues 97 to 384 form the tr-type G domain; the sequence is SRVRNIGIAA…GVVDYLPNPA (288 aa). Residues 106–113, 182–186, and 236–239 contribute to the GTP site; these read AHIDSGKT, DTPGH, and NKMD.

Belongs to the TRAFAC class translation factor GTPase superfamily. Classic translation factor GTPase family. EF-G/EF-2 subfamily.

Its subcellular location is the mitochondrion. Its pathway is protein biosynthesis; polypeptide chain elongation. Functionally, mitochondrial GTPase that catalyzes the GTP-dependent ribosomal translocation step during translation elongation. During this step, the ribosome changes from the pre-translocational (PRE) to the post-translocational (POST) state as the newly formed A-site-bound peptidyl-tRNA and P-site-bound deacylated tRNA move to the P and E sites, respectively. Catalyzes the coordinated movement of the two tRNA molecules, the mRNA and conformational changes in the ribosome. This Aspergillus flavus (strain ATCC 200026 / FGSC A1120 / IAM 13836 / NRRL 3357 / JCM 12722 / SRRC 167) protein is Elongation factor G, mitochondrial (mef1).